The primary structure comprises 372 residues: DNA replication and repair protein RecF (372 aa).

G30–T37 serves as a coordination point for ATP.

It belongs to the RecF family.

Its subcellular location is the cytoplasm. In terms of biological role, the RecF protein is involved in DNA metabolism; it is required for DNA replication and normal SOS inducibility. RecF binds preferentially to single-stranded, linear DNA. It also seems to bind ATP. This chain is DNA replication and repair protein RecF, found in Anaeromyxobacter sp. (strain K).